We begin with the raw amino-acid sequence, 214 residues long: Type 4 apparatus protein DotN (214 aa).

Zn(2+) is bound by residues Cys-52, Cys-55, Cys-84, and Cys-87.

In terms of assembly, the T4BSS is a complex nanomachine composed of several subcomplexes. This subunit is part of the Type IV Coupling Complex (T4CC), a subcomplex composed of the DotLMNYZ core and the IcmSW-LvgA adapter subunits, linked by the C-terminal tail of DotL. Six DotLMNYZ hetero-pentameric units may assemble into a hexameric nanomachine, forming an inner membrane channel for effectors to pass through. Interacts directly with DotL. Interacts with DotZ.

It is found in the cytoplasm. Functionally, component of the Dot/Icm type IVB secretion system (T4BSS), which is used to inject bacterial effector proteins into eukaryotic host cells. Part of a subcomplex which recruits effector proteins and delivers them to the core transmembrane subcomplex. The sequence is that of Type 4 apparatus protein DotN from Legionella pneumophila subsp. pneumophila (strain Philadelphia 1 / ATCC 33152 / DSM 7513).